A 128-amino-acid polypeptide reads, in one-letter code: Large ribosomal subunit protein bL12 (128 aa).

It belongs to the bacterial ribosomal protein bL12 family. As to quaternary structure, homodimer. Part of the ribosomal stalk of the 50S ribosomal subunit. Forms a multimeric L10(L12)X complex, where L10 forms an elongated spine to which 2 to 4 L12 dimers bind in a sequential fashion. Binds GTP-bound translation factors.

Functionally, forms part of the ribosomal stalk which helps the ribosome interact with GTP-bound translation factors. Is thus essential for accurate translation. The protein is Large ribosomal subunit protein bL12 of Sorangium cellulosum (strain So ce56) (Polyangium cellulosum (strain So ce56)).